Reading from the N-terminus, the 347-residue chain is 4-hydroxy-2-oxovalerate aldolase (347 aa).

The Pyruvate carboxyltransferase domain maps to 2-252; the sequence is ILISDATLRD…DTRTTFERVM (251 aa). Residue 10–11 coordinates substrate; it reads RD. D11 serves as a coordination point for Mn(2+). Catalysis depends on H14, which acts as the Proton acceptor. Positions 164 and 191 each coordinate substrate. H191 and H193 together coordinate Mn(2+).

This sequence belongs to the 4-hydroxy-2-oxovalerate aldolase family.

The enzyme catalyses (S)-4-hydroxy-2-oxopentanoate = acetaldehyde + pyruvate. This chain is 4-hydroxy-2-oxovalerate aldolase (mhpE), found in Burkholderia pseudomallei (strain 1710b).